The following is a 314-amino-acid chain: Porphobilinogen deaminase (314 aa).

An S-(dipyrrolylmethanemethyl)cysteine modification is found at Cys-249.

This sequence belongs to the HMBS family. In terms of assembly, monomer. Dipyrromethane serves as cofactor.

It carries out the reaction 4 porphobilinogen + H2O = hydroxymethylbilane + 4 NH4(+). Its pathway is porphyrin-containing compound metabolism; protoporphyrin-IX biosynthesis; coproporphyrinogen-III from 5-aminolevulinate: step 2/4. Functionally, tetrapolymerization of the monopyrrole PBG into the hydroxymethylbilane pre-uroporphyrinogen in several discrete steps. The polypeptide is Porphobilinogen deaminase (Brucella abortus (strain S19)).